A 303-amino-acid chain; its full sequence is Coenzyme PQQ synthesis protein B (303 aa).

Belongs to the PqqB family.

The protein operates within cofactor biosynthesis; pyrroloquinoline quinone biosynthesis. May be involved in the transport of PQQ or its precursor to the periplasm. The protein is Coenzyme PQQ synthesis protein B of Acinetobacter baumannii (strain SDF).